Consider the following 264-residue polypeptide: Small ribosomal subunit protein uS2 (264 aa).

The interval 228 to 264 is disordered; the sequence is HEDVSAGPVEEQSDEAQAAEQGTEGDTAQLTSSQGRS. Positions 251–264 are enriched in polar residues; it reads EGDTAQLTSSQGRS.

It belongs to the universal ribosomal protein uS2 family.

The sequence is that of Small ribosomal subunit protein uS2 from Deinococcus radiodurans (strain ATCC 13939 / DSM 20539 / JCM 16871 / CCUG 27074 / LMG 4051 / NBRC 15346 / NCIMB 9279 / VKM B-1422 / R1).